A 441-amino-acid polypeptide reads, in one-letter code: Queuine tRNA-ribosyltransferase accessory subunit 2 (441 aa).

Positions 307, 309, 312, and 338 each coordinate Zn(2+).

Belongs to the queuine tRNA-ribosyltransferase family. QTRT2 subfamily. In terms of assembly, heterodimer of a catalytic subunit and an accessory subunit. The cofactor is Zn(2+).

Its subcellular location is the cytoplasm. Functionally, non-catalytic subunit of the queuine tRNA-ribosyltransferase (TGT) that catalyzes the base-exchange of a guanine (G) residue with queuine (Q) at position 34 (anticodon wobble position) in tRNAs with GU(N) anticodons (tRNA-Asp, -Asn, -His and -Tyr), resulting in the hypermodified nucleoside queuosine (7-(((4,5-cis-dihydroxy-2-cyclopenten-1-yl)amino)methyl)-7-deazaguanosine). The protein is Queuine tRNA-ribosyltransferase accessory subunit 2 (qtr2) of Schizosaccharomyces pombe (strain 972 / ATCC 24843) (Fission yeast).